Here is a 630-residue protein sequence, read N- to C-terminus: A-type voltage-gated potassium channel KCND2 (630 aa).

The Cytoplasmic segment spans residues 1-184 (MAAGVAAWLP…FENPHTSTMA (184 aa)). Residues 2-20 (AAGVAAWLPFARAAAIGWM) are interaction with KCNIP1, KCNIP2, and other family members. Thr-38 carries the phosphothreonine modification. Residues 71–90 (ERDFFYHPETQQYFFDRDPD) are interaction with KCNIP1. The Zn(2+) site is built by His-105, Cys-111, Cys-132, and Cys-133. Residues 185–206 (LVFYYVTGFFIAVSVIANVVET) traverse the membrane as a helical segment. Residues 207 to 226 (VPCGSSPGHIKELPCGERYA) lie on the Extracellular side of the membrane. The helical transmembrane segment at 227 to 249 (VAFFCLDTACVMIFTVEYLLRLA) threads the bilayer. Topologically, residues 250–256 (AAPSRYR) are cytoplasmic. The helical transmembrane segment at 257 to 281 (FVRSVMSIIDVVAILPYYIGLVMTD) threads the bilayer. Residues 282-287 (NEDVSG) lie on the Extracellular side of the membrane. Residues 288–307 (AFVTLRVFRVFRIFKFSRHS) traverse the membrane as a helical; Voltage-sensor segment. Residues 308–321 (QGLRILGYTLKSCA) lie on the Cytoplasmic side of the membrane. An S4-S5 linker region spans residues 308–321 (QGLRILGYTLKSCA). A helical transmembrane segment spans residues 322–345 (SELGFLLFSLTMAIIIFATVMFYA). Residues 346–357 (EKGSSASKFTSI) are Extracellular-facing. Residues 358–369 (PAAFWYTIVTMT) constitute an intramembrane region (helical). Thr-370, Leu-371, Gly-372, and Tyr-373 together coordinate K(+). The Selectivity filter signature appears at 370 to 375 (TLGYGD). An intramembrane segment occupies 370-377 (TLGYGDMV). The Extracellular segment spans residues 378–380 (PKT). The helical transmembrane segment at 381–403 (IAGKIFGSICSLSGVLVIALPVP) threads the bilayer. Residues 404 to 630 (VIVSNFSRIY…GGNIVRVSAL (227 aa)) lie on the Cytoplasmic side of the membrane. Ser-438 carries the phosphoserine modification. Residues 474 to 489 (FETQHHHLLHCLEKTT) are required for dendritic targeting. An important for normal channel activation and inactivation, for interaction with KCNIP2, and probably other family members as well region spans residues 474–630 (FETQHHHLLH…GGNIVRVSAL (157 aa)). Ser-548, Ser-552, Ser-572, and Ser-575 each carry phosphoserine. The interval 600 to 623 (IPTPPVTTPEGDDRPESPEYSGGN) is disordered. Residues Thr-602 and Thr-607 each carry the phosphothreonine modification. Ser-616 is modified (phosphoserine). The PDZ-binding motif lies at 627-630 (VSAL).

Belongs to the potassium channel family. D (Shal) (TC 1.A.1.2) subfamily. Kv4.2/KCND2 sub-subfamily. As to quaternary structure, homotetramer or heterotetramer with KCND1 or KCND3. Associates with the regulatory subunits KCNIP1, KCNIP2, KCNIP3 and KCNIP4. Interacts with DPP6, DPP10, DLG4 and DLG1. In vivo, probably exists as heteromeric complex containing variable proportions of KCND1, KCND2, KCND3, KCNIP1, KCNIP2, KCNIP3, KCNIP4, DPP6 and DPP10. The tetrameric channel can associate with up to four regulatory subunits, such as KCNIP2 or KCNIP4. Interaction with KCNIP3 promotes tetramerization and formation of a functional potassium channel. Interaction with four KCNIP4 chains does not reduce interaction with DPP10. Probably part of a complex consisting of KCNIP1, KCNIP2 isoform 3 and KCND2. Interacts with FLNA and FLNC. Interacts with NCS1/FREQ. Identified in a complex with cAMP-dependent protein kinase (PKA), CAV3, AKAP6 and KCND3 in cardiac myocytes. Interacts (via S1 and S2 helices) with DPP6; this interaction stabilizes the conformation of the S1-S2 helices and facilitates S4 conformational change, including S4 sliding up and down, thereby accelerating activation, inactivation, and recovery. In terms of processing, phosphorylation at Ser-438 in response to MAPK activation is increased in stimulated dendrites. Interaction with KCNIP2 and DPP6 propomtes phosphorylation by PKA at Ser-552. Phosphorylation at Ser-552 has no effect on interaction with KCNIP3, but is required for the regulation of channel activity by KCNIP3. Phosphorylation at Ser-552 leads to KCND2 internalization. Phosphorylated by MAPK in response to signaling via the metabotropic glutamate receptor GRM5. Phosphorylation at Ser-616 is required for the down-regulation of neuronal A-type currents in response to signaling via GRM5. As to expression, detected in brain frontal cortex.

It localises to the cell membrane. The protein resides in the cell projection. It is found in the dendrite. The protein localises to the synapse. Its subcellular location is the perikaryon. It localises to the postsynaptic cell membrane. The protein resides in the dendritic spine. It is found in the sarcolemma. The protein localises to the cell junction. Its subcellular location is the membrane. It localises to the caveola. The catalysed reaction is K(+)(in) = K(+)(out). Functionally, voltage-gated potassium channel that mediates transmembrane potassium transport in excitable membranes, primarily in the brain. Mediates the major part of the dendritic A-type current I(SA) in brain neurons. This current is activated at membrane potentials that are below the threshold for action potentials. It regulates neuronal excitability, prolongs the latency before the first spike in a series of action potentials, regulates the frequency of repetitive action potential firing, shortens the duration of action potentials and regulates the back-propagation of action potentials from the neuronal cell body to the dendrites. Contributes to the regulation of the circadian rhythm of action potential firing in suprachiasmatic nucleus neurons, which regulates the circadian rhythm of locomotor activity. Functions downstream of the metabotropic glutamate receptor GRM5 and plays a role in neuronal excitability and in nociception mediated by activation of GRM5. Mediates the transient outward current I(to) in rodent heart left ventricle apex cells, but not in human heart, where this current is mediated by another family member. Forms tetrameric potassium-selective channels through which potassium ions pass in accordance with their electrochemical gradient. The channel alternates between opened and closed conformations in response to the voltage difference across the membrane. Can form functional homotetrameric channels and heterotetrameric channels that contain variable proportions of KCND2 and KCND3; channel properties depend on the type of pore-forming alpha subunits that are part of the channel. In vivo, membranes probably contain a mixture of heteromeric potassium channel complexes. Interaction with specific isoforms of the regulatory subunits KCNIP1, KCNIP2, KCNIP3 or KCNIP4 strongly increases expression at the cell surface and thereby increases channel activity; it modulates the kinetics of channel activation and inactivation, shifts the threshold for channel activation to more negative voltage values, shifts the threshold for inactivation to less negative voltages and accelerates recovery after inactivation. Likewise, interaction with DPP6 or DPP10 promotes expression at the cell membrane and regulates both channel characteristics and activity. Upon depolarization, the channel goes from a resting closed state (C state) to an activated but non-conducting state (C* state), from there, the channel may either inactivate (I state) or open (O state). This chain is A-type voltage-gated potassium channel KCND2, found in Oryctolagus cuniculus (Rabbit).